A 317-amino-acid chain; its full sequence is Melanocyte-stimulating hormone receptor (317 aa).

Residues 1-37 (MPVQGSQRRLLGSLNSTPTATPHLGLAANQTGARCLE) lie on the Extracellular side of the membrane. N-linked (GlcNAc...) asparagine glycosylation is present at Asn29. Residues 38–63 (VSVPDGLFLSLGLVSLVENVLVVTAI) traverse the membrane as a helical segment. The Cytoplasmic portion of the chain corresponds to 64–72 (AKNRNLHSP). The helical transmembrane segment at 73–93 (MYCFICCLALSDLLVSGSNML) threads the bilayer. The Extracellular portion of the chain corresponds to 94–118 (ETAVTLLLEAGALAARAAVVQQLDN). A helical membrane pass occupies residues 119 to 140 (VIDVITCSSMLSSLCFLGAIAV). Residues 141–163 (DRYISIFYALRYHSIVTLPRARR) lie on the Cytoplasmic side of the membrane. Residues 164–183 (AVAAIWVASVLFSTLFIAYY) traverse the membrane as a helical segment. Residues 184–191 (DHAAVLLC) are Extracellular-facing. Residues 192-211 (LVIFFLAMLVLMAVLYVHML) form a helical membrane-spanning segment. Residues 212-240 (ARACQHAQGIARLHKRQRLAHQGFGLKGA) lie on the Cytoplasmic side of the membrane. The helical transmembrane segment at 241–266 (ATLTILLGIFFLCWGPFFLHLTLIVL) threads the bilayer. At 267–279 (CPQHPTCSCIFKN) the chain is on the extracellular side. A helical transmembrane segment spans residues 280–300 (FNLFLALIICNAIIDPLIYAF). The Cytoplasmic segment spans residues 301 to 317 (RSQELRRTLKEVLLCSW). Residue Cys315 is the site of S-palmitoyl cysteine attachment.

The protein belongs to the G-protein coupled receptor 1 family. As to quaternary structure, interacts with MGRN1, but does not undergo MGRN1-mediated ubiquitination; this interaction competes with GNAS-binding and thus inhibits agonist-induced cAMP production. Interacts with OPN3; the interaction results in a decrease in MC1R-mediated cAMP signaling and ultimately a decrease in melanin production in melanocytes.

The protein resides in the cell membrane. Its function is as follows. Receptor for MSH (alpha, beta and gamma) and ACTH. The activity of this receptor is mediated by G proteins which activate adenylate cyclase. Mediates melanogenesis, the production of eumelanin (black/brown) and phaeomelanin (red/yellow), via regulation of cAMP signaling in melanocytes. The chain is Melanocyte-stimulating hormone receptor (MC1R) from Papio hamadryas (Hamadryas baboon).